A 318-amino-acid polypeptide reads, in one-letter code: UDP-N-acetylenolpyruvoylglucosamine reductase (318 aa).

In terms of domain architecture, FAD-binding PCMH-type spans 38–204 (IGGICPVVVE…LGIEILLKEG (167 aa)). Residue R182 is part of the active site. Positions 212–232 (SLKDKRDRRNSSQPENKKSAG) are disordered. Basic and acidic residues predominate over residues 213 to 229 (LKDKRDRRNSSQPENKK). S233 serves as the catalytic Proton donor. E310 is an active-site residue.

This sequence belongs to the MurB family. It depends on FAD as a cofactor.

The protein localises to the cytoplasm. The enzyme catalyses UDP-N-acetyl-alpha-D-muramate + NADP(+) = UDP-N-acetyl-3-O-(1-carboxyvinyl)-alpha-D-glucosamine + NADPH + H(+). Its pathway is cell wall biogenesis; peptidoglycan biosynthesis. Functionally, cell wall formation. In Leptospira borgpetersenii serovar Hardjo-bovis (strain JB197), this protein is UDP-N-acetylenolpyruvoylglucosamine reductase.